The primary structure comprises 424 residues: Serpin-Z2A (424 aa).

The segment at 370 to 394 (GTEAAASTACTIRLLSMSYPEDFVA) is RCL.

It belongs to the serpin family.

Its function is as follows. Probable serine protease inhibitor. This Oryza sativa subsp. japonica (Rice) protein is Serpin-Z2A.